A 407-amino-acid polypeptide reads, in one-letter code: Argininosuccinate synthase (407 aa).

ATP-binding positions include 16–24 (AYSGGLDTS) and alanine 44. Positions 96 and 101 each coordinate L-citrulline. Glycine 126 provides a ligand contact to ATP. L-aspartate is bound by residues threonine 128, asparagine 132, and aspartate 133. Asparagine 132 lines the L-citrulline pocket. Positions 136, 185, 194, 270, and 282 each coordinate L-citrulline.

It belongs to the argininosuccinate synthase family. Type 1 subfamily. As to quaternary structure, homotetramer.

The protein resides in the cytoplasm. The enzyme catalyses L-citrulline + L-aspartate + ATP = 2-(N(omega)-L-arginino)succinate + AMP + diphosphate + H(+). Its pathway is amino-acid biosynthesis; L-arginine biosynthesis; L-arginine from L-ornithine and carbamoyl phosphate: step 2/3. The protein is Argininosuccinate synthase of Shewanella sp. (strain W3-18-1).